The following is a 124-amino-acid chain: Small ribosomal subunit protein bS16 (124 aa).

Residues 82-124 (LAKRPARSNPTKAVPGKKAQERAAEAKQKAEDAAAAAAESAAE) are disordered. Residues 99–113 (KAQERAAEAKQKAED) are compositionally biased toward basic and acidic residues. The span at 114-124 (AAAAAAESAAE) shows a compositional bias: low complexity.

It belongs to the bacterial ribosomal protein bS16 family.

This is Small ribosomal subunit protein bS16 from Sinorhizobium fredii (strain NBRC 101917 / NGR234).